The sequence spans 37 residues: Large ribosomal subunit protein bL36c (37 aa).

The protein belongs to the bacterial ribosomal protein bL36 family.

It is found in the plastid. The protein localises to the chloroplast. The polypeptide is Large ribosomal subunit protein bL36c (Vitis vinifera (Grape)).